The primary structure comprises 296 residues: Phosphatidylglycerol--prolipoprotein diacylglyceryl transferase (296 aa).

3 consecutive transmembrane segments (helical) span residues 17–37 (LAVR…IVVG), 59–79 (MMFY…VLFY), and 97–117 (GGMS…LFAW). Arginine 142 contacts a 1,2-diacyl-sn-glycero-3-phospho-(1'-sn-glycerol). 2 helical membrane passes run 230–250 (MGAI…TVEF) and 265–285 (LSMG…MMIW).

It belongs to the Lgt family.

It is found in the cell inner membrane. It carries out the reaction L-cysteinyl-[prolipoprotein] + a 1,2-diacyl-sn-glycero-3-phospho-(1'-sn-glycerol) = an S-1,2-diacyl-sn-glyceryl-L-cysteinyl-[prolipoprotein] + sn-glycerol 1-phosphate + H(+). It participates in protein modification; lipoprotein biosynthesis (diacylglyceryl transfer). Catalyzes the transfer of the diacylglyceryl group from phosphatidylglycerol to the sulfhydryl group of the N-terminal cysteine of a prolipoprotein, the first step in the formation of mature lipoproteins. The protein is Phosphatidylglycerol--prolipoprotein diacylglyceryl transferase of Burkholderia thailandensis (strain ATCC 700388 / DSM 13276 / CCUG 48851 / CIP 106301 / E264).